We begin with the raw amino-acid sequence, 177 residues long: Putative 3-methyladenine DNA glycosylase (177 aa).

This sequence belongs to the DNA glycosylase MPG family.

The sequence is that of Putative 3-methyladenine DNA glycosylase from Rickettsia felis (strain ATCC VR-1525 / URRWXCal2) (Rickettsia azadi).